We begin with the raw amino-acid sequence, 46 residues long: Bacteriocin acidocin 8912 (46 aa).

Residues 1-20 constitute a propeptide that is removed on maturation; the sequence is MISSHQKTLTDKELALISGG.

It is found in the secreted. Functionally, has a bactericidal effect on sensitive cells but not a bacteriolytic effect. In Lactobacillus acidophilus, this protein is Bacteriocin acidocin 8912 (acdT).